The sequence spans 214 residues: Orotate phosphoribosyltransferase (214 aa).

Lys26 serves as a coordination point for 5-phospho-alpha-D-ribose 1-diphosphate. Orotate is bound at residue 34–35 (FF). 5-phospho-alpha-D-ribose 1-diphosphate is bound by residues 72 to 73 (YK), Arg99, Lys100, Lys103, His105, and 124 to 132 (DDVITAGTA). Orotate contacts are provided by Thr128 and Arg156.

It belongs to the purine/pyrimidine phosphoribosyltransferase family. PyrE subfamily. As to quaternary structure, homodimer. Mg(2+) is required as a cofactor.

It catalyses the reaction orotidine 5'-phosphate + diphosphate = orotate + 5-phospho-alpha-D-ribose 1-diphosphate. It functions in the pathway pyrimidine metabolism; UMP biosynthesis via de novo pathway; UMP from orotate: step 1/2. Catalyzes the transfer of a ribosyl phosphate group from 5-phosphoribose 1-diphosphate to orotate, leading to the formation of orotidine monophosphate (OMP). In Pasteurella multocida (strain Pm70), this protein is Orotate phosphoribosyltransferase.